Consider the following 790-residue polypeptide: Vacuolar protein sorting-associated protein 35B (790 aa).

It belongs to the VPS35 family. In terms of assembly, component of the retromer complex which consists of VPS29 (MAG1), VPS26 (VPS26A or VPS26B), VPS35 (VPS35A or VPS35B or VPS35C), VPS5/17 (SNX1 or SNX2A or SNX2B). Component of a retromer subcomplex consisting of VPS29 (MAG1), VPS26 (VPS26A or VPS26B), VPS35 (VPS35A or VPS35B or VPS35C). In terms of tissue distribution, expressed in siliques and maturing seeds (at protein level).

It is found in the cytoplasm. The protein localises to the endosome membrane. The protein resides in the prevacuolar compartment membrane. Its subcellular location is the golgi apparatus. It localises to the trans-Golgi network membrane. In terms of biological role, plays a role in vesicular protein sorting. Component of the membrane-associated retromer complex which is essential in endosome-to-Golgi retrograde transport. Also involved in the efficient sorting of seed storage proteins globulin 12S and albumin 2S. The VPS29-VPS26-VPS35 subcomplex may be involved in recycling of specific cargos from endosome to the plasma membrane. The chain is Vacuolar protein sorting-associated protein 35B (VPS35B) from Arabidopsis thaliana (Mouse-ear cress).